Reading from the N-terminus, the 709-residue chain is Polyribonucleotide nucleotidyltransferase (709 aa).

Mg(2+) contacts are provided by aspartate 486 and aspartate 492. The region spanning 553 to 612 is the KH domain; the sequence is PRIHTIKINADKIKDVIGKGGSVIRALTEETGTTIEIEDDGTVKIAATSGEQAKQAIARI. Positions 622–690 constitute an S1 motif domain; the sequence is GRIYNGKVTR…RQGRIRLSMK (69 aa). Positions 690–709 are disordered; sequence KEAQATQQEAAETSSEDPAN. Residues 691–702 show a composition bias toward low complexity; it reads EAQATQQEAAET.

This sequence belongs to the polyribonucleotide nucleotidyltransferase family. Component of the RNA degradosome, which is a multiprotein complex involved in RNA processing and mRNA degradation. Mg(2+) serves as cofactor.

It is found in the cytoplasm. It catalyses the reaction RNA(n+1) + phosphate = RNA(n) + a ribonucleoside 5'-diphosphate. Its function is as follows. Involved in mRNA degradation. Catalyzes the phosphorolysis of single-stranded polyribonucleotides processively in the 3'- to 5'-direction. This chain is Polyribonucleotide nucleotidyltransferase, found in Proteus mirabilis (strain HI4320).